A 322-amino-acid polypeptide reads, in one-letter code: Cytochrome f (322 aa).

The N-terminal stretch at 1–35 (MQTRNTFSWTWIREEITRSISVSLMIYIITWSSIS) is a signal peptide. Positions 38, 58, 61, and 62 each coordinate heme. The chain crosses the membrane as a helical span at residues 288 to 308 (VQGLLFFLGSVVLAQIFLVLK).

This sequence belongs to the cytochrome f family. The 4 large subunits of the cytochrome b6-f complex are cytochrome b6, subunit IV (17 kDa polypeptide, petD), cytochrome f and the Rieske protein, while the 4 small subunits are PetG, PetL, PetM and PetN. The complex functions as a dimer. It depends on heme as a cofactor.

The protein localises to the plastid. It is found in the chloroplast thylakoid membrane. Component of the cytochrome b6-f complex, which mediates electron transfer between photosystem II (PSII) and photosystem I (PSI), cyclic electron flow around PSI, and state transitions. This is Cytochrome f from Aethionema grandiflorum (Persian stone-cress).